Reading from the N-terminus, the 223-residue chain is Endonuclease V (223 aa).

Positions 45 and 113 each coordinate Mg(2+).

Belongs to the endonuclease V family. The cofactor is Mg(2+).

The protein localises to the cytoplasm. The catalysed reaction is Endonucleolytic cleavage at apurinic or apyrimidinic sites to products with a 5'-phosphate.. Its function is as follows. DNA repair enzyme involved in the repair of deaminated bases. Selectively cleaves double-stranded DNA at the second phosphodiester bond 3' to a deoxyinosine leaving behind the intact lesion on the nicked DNA. This is Endonuclease V from Dehalococcoides mccartyi (strain CBDB1).